Consider the following 363-residue polypeptide: S-adenosylmethionine:tRNA ribosyltransferase-isomerase (363 aa).

The protein belongs to the QueA family. As to quaternary structure, monomer.

Its subcellular location is the cytoplasm. It carries out the reaction 7-aminomethyl-7-carbaguanosine(34) in tRNA + S-adenosyl-L-methionine = epoxyqueuosine(34) in tRNA + adenine + L-methionine + 2 H(+). Its pathway is tRNA modification; tRNA-queuosine biosynthesis. Transfers and isomerizes the ribose moiety from AdoMet to the 7-aminomethyl group of 7-deazaguanine (preQ1-tRNA) to give epoxyqueuosine (oQ-tRNA). The protein is S-adenosylmethionine:tRNA ribosyltransferase-isomerase of Haemophilus influenzae (strain ATCC 51907 / DSM 11121 / KW20 / Rd).